Here is a 1080-residue protein sequence, read N- to C-terminus: Isoleucine--tRNA ligase (1080 aa).

A 'HIGH' region motif is present at residues 48–58; it reads PYASGSIHLGT. Residues 628 to 632 carry the 'KMSKS' region motif; sequence KMSKS. Lys631 is a binding site for ATP.

The protein belongs to the class-I aminoacyl-tRNA synthetase family. IleS type 2 subfamily. As to quaternary structure, monomer. Zn(2+) serves as cofactor.

The protein localises to the cytoplasm. The enzyme catalyses tRNA(Ile) + L-isoleucine + ATP = L-isoleucyl-tRNA(Ile) + AMP + diphosphate. In terms of biological role, catalyzes the attachment of isoleucine to tRNA(Ile). As IleRS can inadvertently accommodate and process structurally similar amino acids such as valine, to avoid such errors it has two additional distinct tRNA(Ile)-dependent editing activities. One activity is designated as 'pretransfer' editing and involves the hydrolysis of activated Val-AMP. The other activity is designated 'posttransfer' editing and involves deacylation of mischarged Val-tRNA(Ile). This is Isoleucine--tRNA ligase from Methanopyrus kandleri (strain AV19 / DSM 6324 / JCM 9639 / NBRC 100938).